The following is a 181-amino-acid chain: Inner membrane-spanning protein YciB (181 aa).

The next 5 membrane-spanning stretches (helical) occupy residues 22-42 (IYTA…VTYA), 50-70 (MQLI…FLHD), 80-100 (IVYC…KPVI), 122-142 (WVLF…EMPL), and 148-168 (FKVF…GMYV).

Belongs to the YciB family.

The protein resides in the cell inner membrane. Its function is as follows. Plays a role in cell envelope biogenesis, maintenance of cell envelope integrity and membrane homeostasis. This is Inner membrane-spanning protein YciB from Aliivibrio fischeri (strain MJ11) (Vibrio fischeri).